Reading from the N-terminus, the 497-residue chain is Probable cytosol aminopeptidase (497 aa).

Residues K267 and D272 each coordinate Mn(2+). K279 is an active-site residue. 3 residues coordinate Mn(2+): D290, D349, and E351. R353 is a catalytic residue.

This sequence belongs to the peptidase M17 family. Mn(2+) is required as a cofactor.

Its subcellular location is the cytoplasm. It catalyses the reaction Release of an N-terminal amino acid, Xaa-|-Yaa-, in which Xaa is preferably Leu, but may be other amino acids including Pro although not Arg or Lys, and Yaa may be Pro. Amino acid amides and methyl esters are also readily hydrolyzed, but rates on arylamides are exceedingly low.. The catalysed reaction is Release of an N-terminal amino acid, preferentially leucine, but not glutamic or aspartic acids.. In terms of biological role, presumably involved in the processing and regular turnover of intracellular proteins. Catalyzes the removal of unsubstituted N-terminal amino acids from various peptides. The polypeptide is Probable cytosol aminopeptidase (Syntrophotalea carbinolica (strain DSM 2380 / NBRC 103641 / GraBd1) (Pelobacter carbinolicus)).